Here is a 428-residue protein sequence, read N- to C-terminus: Flotillin-2 (428 aa).

A lipid anchor (N-myristoyl glycine) is attached at Gly2. Cys4 carries the S-palmitoyl cysteine; by ZDHHC5 lipid modification. Cys19 carries the S-palmitoyl cysteine lipid modification. The S-palmitoyl cysteine; by ZDHHC5 moiety is linked to residue Cys20. Ser405 bears the Phosphoserine mark.

This sequence belongs to the band 7/mec-2 family. Flotillin subfamily. Heterooligomeric complex of flotillin-1 and flotillin-2 and caveolin-1 and caveolin-2. Interacts with ECPAS. ZDHHC5-catalyzed palmitoylation may be required for the formation of higher-order complexes and for neurite outgrowth in cultured neural stem cells. In terms of tissue distribution, expressed in many tissues, including suprabasal epidermis, hair follicles, heart, lung, thymus, spleen, liver, kidney and brain. Not expressed in skeletal muscle.

The protein resides in the cell membrane. It localises to the membrane. Its subcellular location is the caveola. It is found in the endosome. Its function is as follows. May act as a scaffolding protein within caveolar membranes, functionally participating in formation of caveolae or caveolae-like vesicles. May be involved in epidermal cell adhesion and epidermal structure and function. This chain is Flotillin-2 (Flot2), found in Mus musculus (Mouse).